The following is a 247-amino-acid chain: Adenosylcobinamide-GDP ribazoletransferase (247 aa).

6 consecutive transmembrane segments (helical) span residues 34–54 (IVMF…IFIL), 59–79 (CGIP…TGGF), 113–133 (GGLA…ELAL), 138–158 (MLAA…LLMY), 171–191 (VFIG…AVIV), and 194–214 (VLLP…AIFI).

The protein belongs to the CobS family. Mg(2+) serves as cofactor.

The protein localises to the cell inner membrane. It catalyses the reaction alpha-ribazole + adenosylcob(III)inamide-GDP = adenosylcob(III)alamin + GMP + H(+). The enzyme catalyses alpha-ribazole 5'-phosphate + adenosylcob(III)inamide-GDP = adenosylcob(III)alamin 5'-phosphate + GMP + H(+). Its pathway is cofactor biosynthesis; adenosylcobalamin biosynthesis; adenosylcobalamin from cob(II)yrinate a,c-diamide: step 7/7. Its function is as follows. Joins adenosylcobinamide-GDP and alpha-ribazole to generate adenosylcobalamin (Ado-cobalamin). Also synthesizes adenosylcobalamin 5'-phosphate from adenosylcobinamide-GDP and alpha-ribazole 5'-phosphate. The protein is Adenosylcobinamide-GDP ribazoletransferase of Salmonella paratyphi A (strain ATCC 9150 / SARB42).